The chain runs to 84 residues: Serine palmitoyltransferase-regulating protein TSC3 (84 aa).

A helical membrane pass occupies residues Leu-63–Phe-83.

The protein resides in the endoplasmic reticulum membrane. Functionally, stimulates the activity of serine palmitoyltransferase (SPT), and thus plays a role in the biosynthesis of sphingolipids. In Kluyveromyces lactis (strain ATCC 8585 / CBS 2359 / DSM 70799 / NBRC 1267 / NRRL Y-1140 / WM37) (Yeast), this protein is Serine palmitoyltransferase-regulating protein TSC3 (TSC3).